We begin with the raw amino-acid sequence, 630 residues long: YTH domain-containing family protein 1 (630 aa).

Disordered stretches follow at residues 38 to 113 (DMTQ…YMQQ), 160 to 183 (YYPQ…AGPY), and 200 to 241 (QVGD…QSGH). Residues 70–102 (PGQQQQHQYGSPPNTNGNAQPMPQAHGNNTMNS) show a composition bias toward polar residues. Positions 382–590 (EKYFILKSLT…SVGRKLTGLF (209 aa)) constitute a YTH domain.

It belongs to the YTHDF family. YTHDF1 subfamily.

The protein resides in the cytoplasm. Its subcellular location is the P-body. In terms of biological role, specifically recognizes and binds N6-methyladenosine (m6A)-containing mRNAs, and regulates their stability. M6A is a modification present at internal sites of mRNAs and some non-coding RNAs and plays a role in mRNA stability and processing. Plays a role in pathogenicity towards plant host. The chain is YTH domain-containing family protein 1 from Pyricularia oryzae (strain 70-15 / ATCC MYA-4617 / FGSC 8958) (Rice blast fungus).